Reading from the N-terminus, the 278-residue chain is Tropomyosin A (278 aa).

Residues Ile1–Thr270 are a coiled coil. Positions Asp92–Arg134 are disordered. Residues Gln95–Ser104 show a composition bias toward polar residues. Residues Thr105–Arg134 show a composition bias toward basic and acidic residues.

It belongs to the tropomyosin family. As to quaternary structure, homodimer.

Tropomyosin, in association with the troponin complex, plays a central role in the calcium dependent regulation of muscle contraction. The sequence is that of Tropomyosin A from Echinococcus granulosus (Hydatid tapeworm).